We begin with the raw amino-acid sequence, 582 residues long: Vacuolar basic amino acid transporter 5 (582 aa).

The Cytoplasmic portion of the chain corresponds to 1–44; sequence MEETKYSSQQEIEGACGSDASLNARGSNDSPMGLSLYLCLASLT. Residues 45-65 traverse the membrane as a helical segment; the sequence is LVLFITALDILIVGTIIDVVA. Over 66-80 the chain is Vacuolar; sequence EQFGNYSKTGWLVTG. An N-linked (GlcNAc...) asparagine glycan is attached at Asn-70. The helical transmembrane segment at 81 to 101 threads the bilayer; the sequence is YSLPNAILSLIWGRFASIIGF. Topologically, residues 102 to 104 are cytoplasmic; the sequence is QHS. The helical transmembrane segment at 105 to 125 threads the bilayer; it reads LILAILIFEAGSLIAALASSM. Residues 126–132 are Vacuolar-facing; sequence NMLIFGR. The chain crosses the membrane as a helical span at residues 133–153; that stretch reads VVAGVGGSGLQTLCFVIGCTM. At 154–160 the chain is on the cytoplasmic side; the sequence is VGERSRP. The helical transmembrane segment at 161 to 181 threads the bilayer; that stretch reads LVISILSCAFAVAAIVGPIIG. Over 182–191 the chain is Vacuolar; that stretch reads GAFTTHVTWR. The helical transmembrane segment at 192–212 threads the bilayer; the sequence is WCFYINLPIGGLAIIMFLLTY. The Cytoplasmic portion of the chain corresponds to 213-256; the sequence is KAENKGILQQIKDAIGTISSFTFSKFRHQVNFKRLMNGIIFKFD. The helical transmembrane segment at 257–277 threads the bilayer; sequence FFGFALCSAGLVLFLLGLTFG. The Vacuolar portion of the chain corresponds to 278 to 287; the sequence is GNKYSWNSGQ. Residues 288 to 308 traverse the membrane as a helical segment; it reads VITYLVLGVLLFIFSLVYDFF. At 309 to 329 the chain is on the cytoplasmic side; it reads LFDKFNPEPDNISYRPLLLRR. Residues 330 to 350 traverse the membrane as a helical segment; sequence LVAKPAIIIVNMVTFLLCTGY. At 351–372 the chain is on the vacuolar side; that stretch reads NGQMIYSVQFFQLIFASSAWKA. Residues 373 to 393 form a helical membrane-spanning segment; that stretch reads GLHLIPIVITNVIAAIASGVI. Topologically, residues 394-401 are cytoplasmic; it reads TKKLGLVK. A helical membrane pass occupies residues 402-422; that stretch reads PLLIFGGVLGVIGAGLMTLMT. N-linked (GlcNAc...) asparagine glycosylation occurs at Asn-423. Topologically, residues 423 to 430 are vacuolar; sequence NTSTKSTQ. Residues 431–451 form a helical membrane-spanning segment; it reads IGVLLLPGFSLGFALQASLMS. Topologically, residues 452 to 469 are cytoplasmic; it reads AQLQITKDRPEAAMDFIE. The chain crosses the membrane as a helical span at residues 470 to 492; that stretch reads VTAFNTFMKSLGTTLGGVLSTTV. At 493–539 the chain is on the vacuolar side; sequence FSASFHNKVSRAHLEPYEGKTVDDMILYRLQNYDGSHSTIGNILSDS. The chain crosses the membrane as a helical span at residues 540–560; it reads IKNVFWMDLGFYALGFLFCSF. Residues 561–582 lie on the Cytoplasmic side of the membrane; that stretch reads SSNKKLIIPKKDDTPEDNLEDK.

Belongs to the major facilitator superfamily.

The protein localises to the vacuole membrane. Its function is as follows. Transporter required for vacuolar uptake of basic amino acids. The polypeptide is Vacuolar basic amino acid transporter 5 (VBA5) (Saccharomyces cerevisiae (strain ATCC 204508 / S288c) (Baker's yeast)).